Reading from the N-terminus, the 409-residue chain is Peptidase T (409 aa).

His78 lines the Zn(2+) pocket. Asp80 is a catalytic residue. Asp140 contacts Zn(2+). Catalysis depends on Glu173, which acts as the Proton acceptor. Glu174, Asp196, and His379 together coordinate Zn(2+).

This sequence belongs to the peptidase M20B family. Zn(2+) serves as cofactor.

The protein localises to the cytoplasm. The enzyme catalyses Release of the N-terminal residue from a tripeptide.. Functionally, cleaves the N-terminal amino acid of tripeptides. This chain is Peptidase T, found in Escherichia coli (strain SE11).